The primary structure comprises 206 residues: UPF0328 protein ECU01_0050/ECU01_1560 (206 aa).

Disordered stretches follow at residues 1-153 (MPRP…HSHT) and 179-206 (GRLH…LATL). Positions 74-96 (HTEGCHTHEANPEPNTKHTETES) are enriched in basic and acidic residues. Polar residues-rich tracts occupy residues 97–120 (PKPQ…SQNT) and 132–148 (SRPS…QSPH).

This sequence belongs to the UPF0328 family.

The protein is UPF0328 protein ECU01_0050/ECU01_1560 of Encephalitozoon cuniculi (strain GB-M1) (Microsporidian parasite).